Here is a 505-residue protein sequence, read N- to C-terminus: Glutamate--tRNA ligase (505 aa).

The short motif at 12 to 22 (PSPTGDPHVGT) is the 'HIGH' region element. The 'KMSKS' region signature appears at 253–257 (KLSKR). Position 256 (lysine 256) interacts with ATP.

It belongs to the class-I aminoacyl-tRNA synthetase family. Glutamate--tRNA ligase type 1 subfamily. In terms of assembly, monomer.

The protein resides in the cytoplasm. It carries out the reaction tRNA(Glu) + L-glutamate + ATP = L-glutamyl-tRNA(Glu) + AMP + diphosphate. Catalyzes the attachment of glutamate to tRNA(Glu) in a two-step reaction: glutamate is first activated by ATP to form Glu-AMP and then transferred to the acceptor end of tRNA(Glu). This chain is Glutamate--tRNA ligase, found in Chlamydia pneumoniae (Chlamydophila pneumoniae).